Consider the following 249-residue polypeptide: Isoprenyl transferase (249 aa).

The active site involves D29. Mg(2+) is bound at residue D29. Residues 30–33 (GNGR), W34, R42, H46, and 74–76 (STE) each bind substrate. N77 serves as the catalytic Proton acceptor. Residues W78, R80, R197, and 203–205 (RLS) contribute to the substrate site. Residue E216 coordinates Mg(2+).

Belongs to the UPP synthase family. Homodimer. Mg(2+) is required as a cofactor.

Functionally, catalyzes the condensation of isopentenyl diphosphate (IPP) with allylic pyrophosphates generating different type of terpenoids. The protein is Isoprenyl transferase of Gloeobacter violaceus (strain ATCC 29082 / PCC 7421).